The primary structure comprises 71 residues: UPF0499 protein ACLA_083080 (71 aa).

The first 18 residues, Met-1–Ala-18, serve as a signal peptide directing secretion. Intrachain disulfides connect Cys-44–Cys-58, Cys-48–Cys-61, and Cys-54–Cys-68.

Belongs to the UPF0499 family.

It localises to the secreted. The chain is UPF0499 protein ACLA_083080 from Aspergillus clavatus (strain ATCC 1007 / CBS 513.65 / DSM 816 / NCTC 3887 / NRRL 1 / QM 1276 / 107).